Reading from the N-terminus, the 241-residue chain is Transcription initiation factor TFIID subunit 14 (241 aa).

The YEATS domain maps to 1–137 (MTTVKRTVRL…PGLLKALTAT (137 aa)). The interval 141-169 (PGYSDEGEEARKDKRKNESEVGAGKKKAK) is disordered. Residues 149–159 (EARKDKRKNES) show a composition bias toward basic and acidic residues.

This sequence belongs to the TAF14 family. As to quaternary structure, component of the fcp1/TFIIF/polII complex via interaction of tfg3 with both tfg1/TFIIF-alpha and tfg2/TFIIF-beta subunits. Component of the SWI/SNF global transcription activator complex composed of at least arp9, arp42, snf5, snf22, snf30, sbf59, sol1, ssr1, ssr2, ssr3, ssr4 and tfg3. Also interacts with the TATA-binding protein (TBP). Component of the mst2 complex composed of at least eaf6, mst2, nto1, pdp3, ptf1, ptf2 and tfg3.

It is found in the nucleus. The protein localises to the nucleoplasm. Its function is as follows. Functions as a component of the DNA-binding general transcription factor complex TFIID, and the RNA polymerase II associated general transcription factor complex TFIIF. Binding of TFIID to a promoter (with or without TATA element) is the initial step in preinitiation complex (PIC) formation. TFIID plays a key role in the regulation of gene expression by RNA polymerase II through different activities such as transcription activator interaction, core promoter recognition and selectivity, TFIIA and TFIIB interaction, facilitation of DNA opening and initiation of transcription. TFIIF is essential for the initiation of transcription by RNA polymerase II. TFIIF functions include the recruitment of RNA polymerase II to the promoter bound DNA-TBP-TFIIB complex, decreasing the affinity of RNA polymerase II for non-specific DNA, allowing for the subsequent recruitment of TFIIE and TFIIH, and facilitating RNA polymerase II elongation. The TAF14 subunit has stimulatory activity. Component of the SWI/SNF complex, an ATP-dependent chromatin remodeling complex, required for the positive and negative regulation of gene expression of a large number of genes. It changes chromatin structure by altering DNA-histone contacts within a nucleosome, leading eventually to a change in nucleosome position, thus facilitating or repressing binding of gene-specific transcription factors. Component of the mst2 complex which is a highly specific H3 lysine 14 (H3K14) acetyltransferase that functions together with gcn5 to regulate global levels of H3K14 acetylation (H3K14ac), critical for DNA damage checkpoint activation. This is Transcription initiation factor TFIID subunit 14 (tfg3) from Schizosaccharomyces pombe (strain 972 / ATCC 24843) (Fission yeast).